A 446-amino-acid chain; its full sequence is Phosphoglucosamine mutase (446 aa).

Serine 100 acts as the Phosphoserine intermediate in catalysis. Residues serine 100, aspartate 239, aspartate 241, and aspartate 243 each coordinate Mg(2+). Residue serine 100 is modified to Phosphoserine.

Belongs to the phosphohexose mutase family. Mg(2+) serves as cofactor. In terms of processing, activated by phosphorylation.

It carries out the reaction alpha-D-glucosamine 1-phosphate = D-glucosamine 6-phosphate. Catalyzes the conversion of glucosamine-6-phosphate to glucosamine-1-phosphate. This Shouchella clausii (strain KSM-K16) (Alkalihalobacillus clausii) protein is Phosphoglucosamine mutase.